The following is a 494-amino-acid chain: MFKFALALTLCLAGASLSLAQHNPQWWGNRNTIVHLFEWKWSDIAGECETFLAPRGFAGVQVSPVNENIIAAGRPWWERYQPISYKLTTRSGNEEEFADMVRRCNDVGIRIYVDVLLNHMSGDFDGVAVGTAGTEAEPSKKSFPGVPHTAQDFHPSCEITDWNDRFQVQECELVGLKDLNQHSDYVRSKLIEFLDHLIELGVAGFRVDAAKHMAAEDLEYIYGSLSNLNIEHGFPHNARPFIFQEVIDHGHETVSREEYNQLGAVTEFRFSEEIGRAFRGNNALKWLQSWGTDWGFLNSEQALTFVDNHDNQRDHGSVLNYKSPRQYKMATAFHLAYPYGISRVMSSFAFDDHDTPPPQDAQENIISPEFDEDGACVNGWICEHRWRQIYAMVGFKNAVRDTELSGWWDNGDNQISFCRGNKGFLAVNNNLYDLSQELNTCLPAGEYCDVISGSLIDGACTGKSVTVNEYGYGYIHIGSDDFDGVLALHVNAKV.

Residues 1–20 form the signal peptide; it reads MFKFALALTLCLAGASLSLA. Residue Q21 is modified to Pyrrolidone carboxylic acid. A disulfide bond links C48 and C104. N118, Q169, and D178 together coordinate Ca(2+). C157 and C171 are disulfide-bonded. Chloride is bound at residue R206. The active-site Nucleophile is D208. H212 contributes to the Ca(2+) binding site. E245 (proton donor) is an active-site residue. Residues N308 and R343 each coordinate chloride. Cystine bridges form between C376–C382, C418–C441, and C448–C460.

This sequence belongs to the glycosyl hydrolase 13 family. As to quaternary structure, monomer. It depends on Ca(2+) as a cofactor. The cofactor is chloride.

Its subcellular location is the secreted. The enzyme catalyses Endohydrolysis of (1-&gt;4)-alpha-D-glucosidic linkages in polysaccharides containing three or more (1-&gt;4)-alpha-linked D-glucose units.. This Drosophila punjabiensis (Fruit fly) protein is Alpha-amylase-related protein (Amyrel).